The following is a 54-amino-acid chain: Light-harvesting protein B-870 beta chain (54 aa).

Residues 1–20 lie on the Cytoplasmic side of the membrane; it reads EVKQESLSGITEGEAKEFHK. A bacteriochlorophyll-binding residues include histidine 19 and histidine 37. Residues 21–43 form a helical membrane-spanning segment; that stretch reads IFTSSILVFFGVAAFAHLLVWIW. Residues 44 to 54 are Periplasmic-facing; that stretch reads RPWVPGPNGYS.

The protein belongs to the antenna complex beta subunit family. The core complex is formed by different alpha and beta chains, binding bacteriochlorophyll molecules, and arranged most probably in tetrameric structures disposed around the reaction center. The non-pigmented gamma chains may constitute additional components.

The protein localises to the cell inner membrane. In terms of biological role, antenna complexes are light-harvesting systems, which transfer the excitation energy to the reaction centers. This is Light-harvesting protein B-870 beta chain from Rhodospirillum rubrum.